The chain runs to 336 residues: Mediator of RNA polymerase II transcription subunit 4 (336 aa).

2 disordered regions span residues 1–45 (MNST…SNVV) and 59–85 (NVEE…QDEA). Residues 154 to 192 (QQAAQTIAALERVSEGLDDKIRDMIRKLAECRRELRNYQ) are a coiled coil. The disordered stretch occupies residues 281–336 (PVANGVAQNHNNGYAMERRLSTGYGSDNDGDTNMNGRSGLAGLDIFDDDDDDDDDD). The segment covering 325-336 (IFDDDDDDDDDD) has biased composition (acidic residues).

It belongs to the Mediator complex subunit 4 family. In terms of assembly, component of the Mediator complex.

The protein localises to the nucleus. Component of the Mediator complex, a coactivator involved in the regulated transcription of nearly all RNA polymerase II-dependent genes. Mediator functions as a bridge to convey information from gene-specific regulatory proteins to the basal RNA polymerase II transcription machinery. Mediator is recruited to promoters by direct interactions with regulatory proteins and serves as a scaffold for the assembly of a functional preinitiation complex with RNA polymerase II and the general transcription factors. This is Mediator of RNA polymerase II transcription subunit 4 (MED4) from Yarrowia lipolytica (strain CLIB 122 / E 150) (Yeast).